The following is a 596-amino-acid chain: Elongation factor 4 (596 aa).

The tr-type G domain maps to 2-184 (KHIRNFSIIA…VIVEQIPPPE (183 aa)). GTP is bound by residues 14–19 (DHGKST) and 131–134 (NKID).

This sequence belongs to the TRAFAC class translation factor GTPase superfamily. Classic translation factor GTPase family. LepA subfamily.

The protein resides in the cell inner membrane. The enzyme catalyses GTP + H2O = GDP + phosphate + H(+). Its function is as follows. Required for accurate and efficient protein synthesis under certain stress conditions. May act as a fidelity factor of the translation reaction, by catalyzing a one-codon backward translocation of tRNAs on improperly translocated ribosomes. Back-translocation proceeds from a post-translocation (POST) complex to a pre-translocation (PRE) complex, thus giving elongation factor G a second chance to translocate the tRNAs correctly. Binds to ribosomes in a GTP-dependent manner. In Shewanella oneidensis (strain ATCC 700550 / JCM 31522 / CIP 106686 / LMG 19005 / NCIMB 14063 / MR-1), this protein is Elongation factor 4.